Here is a 62-residue protein sequence, read N- to C-terminus: Large ribosomal subunit protein bL33 (62 aa).

This sequence belongs to the bacterial ribosomal protein bL33 family.

This chain is Large ribosomal subunit protein bL33, found in Azobacteroides pseudotrichonymphae genomovar. CFP2.